A 216-amino-acid polypeptide reads, in one-letter code: Peptide deformylase (216 aa).

Residues cysteine 134 and histidine 178 each contribute to the Fe cation site. Residue glutamate 179 is part of the active site. Histidine 182 provides a ligand contact to Fe cation.

Belongs to the polypeptide deformylase family. Fe(2+) serves as cofactor.

It carries out the reaction N-terminal N-formyl-L-methionyl-[peptide] + H2O = N-terminal L-methionyl-[peptide] + formate. Removes the formyl group from the N-terminal Met of newly synthesized proteins. Requires at least a dipeptide for an efficient rate of reaction. N-terminal L-methionine is a prerequisite for activity but the enzyme has broad specificity at other positions. The protein is Peptide deformylase of Mycoplasma pneumoniae (strain ATCC 29342 / M129 / Subtype 1) (Mycoplasmoides pneumoniae).